We begin with the raw amino-acid sequence, 60 residues long: Large ribosomal subunit protein uL30 (60 aa).

The protein belongs to the universal ribosomal protein uL30 family. In terms of assembly, part of the 50S ribosomal subunit.

This is Large ribosomal subunit protein uL30 from Pediococcus pentosaceus (strain ATCC 25745 / CCUG 21536 / LMG 10740 / 183-1w).